Here is a 74-residue protein sequence, read N- to C-terminus: ATP synthase subunit 9, mitochondrial (74 aa).

The next 2 membrane-spanning stretches (helical) occupy residues 12–32 (LATI…AALI) and 50–70 (ILGF…AFLL).

It belongs to the ATPase C chain family. F-type ATPases have 2 components, CF(1) - the catalytic core - and CF(0) - the membrane proton channel. CF(1) has five subunits: alpha(3), beta(3), gamma(1), delta(1), epsilon(1). CF(0) has three main subunits: a, b and c.

It is found in the mitochondrion membrane. Mitochondrial membrane ATP synthase (F(1)F(0) ATP synthase or Complex V) produces ATP from ADP in the presence of a proton gradient across the membrane which is generated by electron transport complexes of the respiratory chain. F-type ATPases consist of two structural domains, F(1) - containing the extramembraneous catalytic core and F(0) - containing the membrane proton channel, linked together by a central stalk and a peripheral stalk. During catalysis, ATP synthesis in the catalytic domain of F(1) is coupled via a rotary mechanism of the central stalk subunits to proton translocation. Part of the complex F(0) domain. A homomeric c-ring of probably 10 subunits is part of the complex rotary element. The polypeptide is ATP synthase subunit 9, mitochondrial (Rhizopus oryzae (Mucormycosis agent)).